Reading from the N-terminus, the 532-residue chain is Purple acid phosphatase 15 (532 aa).

The N-terminal stretch at 1–19 (MTFLLLLLFCFLSPAISSA) is a signal peptide. An N-linked (GlcNAc...) asparagine glycan is attached at Asn136. Asp194 contacts Fe cation. N-linked (GlcNAc...) asparagine glycosylation is present at Asn200. Residues Asp221 and Tyr224 each contribute to the Fe cation site. Asp221 is a binding site for Zn(2+). N-linked (GlcNAc...) asparagine glycans are attached at residues Asn231 and Asn264. Asn277 is a binding site for Zn(2+). Residue Asn277 participates in substrate binding. 2 N-linked (GlcNAc...) asparagine glycosylation sites follow: Asn286 and Asn301. His359 contributes to the Zn(2+) binding site. His369 functions as the Proton donor in the catalytic mechanism. A Zn(2+)-binding site is contributed by His396. 396 to 398 (HVH) lines the substrate pocket. His398 is a Fe cation binding site. N-linked (GlcNAc...) asparagine glycosylation occurs at Asn491.

This sequence belongs to the metallophosphoesterase superfamily. Purple acid phosphatase family. As to quaternary structure, homodimer. Requires Fe cation as cofactor. Zn(2+) is required as a cofactor. In terms of tissue distribution, expressed in roots, stems, cotyledons, leaves, flowers and siliques.

The protein localises to the secreted. It carries out the reaction 1D-myo-inositol hexakisphosphate + H2O = 1D-myo-inositol 1,2,3,5,6-pentakisphosphate + phosphate. The enzyme catalyses a phosphate monoester + H2O = an alcohol + phosphate. In terms of biological role, acid phosphatase activity with p-nitrophenyl phosphate (pNPP), D-myoinositol 1-phosphate (Ins(1)P1), phytic acid and Myo-inositol hexakisphosphate. Low or no activity with Glc-6-P and ATP. Confers shoot growth stimulation, enhanced salt and osmotic stress tolerance, and ABA insensitivity. May modulate ascorbic acid (AsA) levels by controlling the input of myoinositol into this branch of AsA biosynthesis. The chain is Purple acid phosphatase 15 (PAP15) from Arabidopsis thaliana (Mouse-ear cress).